A 342-amino-acid chain; its full sequence is Phosphate acyltransferase (342 aa).

The protein belongs to the PlsX family. In terms of assembly, homodimer. Probably interacts with PlsY.

It is found in the cytoplasm. The enzyme catalyses a fatty acyl-[ACP] + phosphate = an acyl phosphate + holo-[ACP]. It participates in lipid metabolism; phospholipid metabolism. Functionally, catalyzes the reversible formation of acyl-phosphate (acyl-PO(4)) from acyl-[acyl-carrier-protein] (acyl-ACP). This enzyme utilizes acyl-ACP as fatty acyl donor, but not acyl-CoA. This chain is Phosphate acyltransferase, found in Shewanella sp. (strain ANA-3).